A 258-amino-acid polypeptide reads, in one-letter code: Imidazole glycerol phosphate synthase subunit HisF (258 aa).

Catalysis depends on residues Asp11 and Asp130.

Belongs to the HisA/HisF family. In terms of assembly, heterodimer of HisH and HisF.

Its subcellular location is the cytoplasm. It catalyses the reaction 5-[(5-phospho-1-deoxy-D-ribulos-1-ylimino)methylamino]-1-(5-phospho-beta-D-ribosyl)imidazole-4-carboxamide + L-glutamine = D-erythro-1-(imidazol-4-yl)glycerol 3-phosphate + 5-amino-1-(5-phospho-beta-D-ribosyl)imidazole-4-carboxamide + L-glutamate + H(+). It functions in the pathway amino-acid biosynthesis; L-histidine biosynthesis; L-histidine from 5-phospho-alpha-D-ribose 1-diphosphate: step 5/9. Functionally, IGPS catalyzes the conversion of PRFAR and glutamine to IGP, AICAR and glutamate. The HisF subunit catalyzes the cyclization activity that produces IGP and AICAR from PRFAR using the ammonia provided by the HisH subunit. This Rhodospirillum centenum (strain ATCC 51521 / SW) protein is Imidazole glycerol phosphate synthase subunit HisF.